A 182-amino-acid polypeptide reads, in one-letter code: Endoribonuclease YbeY (182 aa).

Zn(2+) is bound by residues H115, H119, and H125.

The protein belongs to the endoribonuclease YbeY family. Requires Zn(2+) as cofactor.

The protein localises to the cytoplasm. Functionally, single strand-specific metallo-endoribonuclease involved in late-stage 70S ribosome quality control and in maturation of the 3' terminus of the 16S rRNA. This Bifidobacterium longum (strain NCC 2705) protein is Endoribonuclease YbeY.